Consider the following 138-residue polypeptide: Putative pre-16S rRNA nuclease (138 aa).

This sequence belongs to the YqgF nuclease family.

It localises to the cytoplasm. Functionally, could be a nuclease involved in processing of the 5'-end of pre-16S rRNA. In Shigella dysenteriae serotype 1 (strain Sd197), this protein is Putative pre-16S rRNA nuclease.